The sequence spans 103 residues: uncharacterized protein (103 aa).

This is an uncharacterized protein from Methanocaldococcus jannaschii (strain ATCC 43067 / DSM 2661 / JAL-1 / JCM 10045 / NBRC 100440) (Methanococcus jannaschii).